Here is a 504-residue protein sequence, read N- to C-terminus: Transcriptional coactivator YAP1 (504 aa).

2 stretches are compositionally biased toward pro residues: residues 1-12 and 20-36; these read MDPGQQPPPQPA and PSQP…PGQP. The tract at residues 1–59 is disordered; sequence MDPGQQPPPQPAPQGQGQPPSQPPQGQGPPSGPGQPAPAATQAAPQAPPAGHQIVHVRG. Residues 37–51 show a composition bias toward low complexity; sequence APAATQAAPQAPPAG. Ser61 carries the phosphoserine; by LATS1 and LATS2 modification. Residue Thr63 is modified to Phosphothreonine. Positions 86–100 form a coiled coil; it reads MRLRKLPDSFFKPPE. At Lys90 the chain carries N6-lactoyllysine. The segment at 91–114 is disordered; it reads LPDSFFKPPEPKSHSRQASTDAGT. At Ser105 the chain carries Phosphoserine. Ser109 bears the Phosphoserine; by LATS1 and LATS2 mark. Phosphothreonine is present on Thr110. Thr119 bears the Phosphothreonine; by MAPK8 and MAPK9 mark. Ser127 is modified (phosphoserine; by LATS1 and LATS2). Ser128 and Ser131 each carry phosphoserine. The segment at 133–158 is disordered; sequence QLGAVSPGTLTPTGVVSGPAATPTAQ. A Phosphoserine; by MAPK8 and MAPK9 modification is found at Ser138. Phosphothreonine; by MAPK8 and MAPK9 is present on Thr154. Ser164 bears the Phosphoserine; by LATS1 and LATS2 mark. 2 WW domains span residues 171–204 and 230–263; these read VPLP…DPRK and GPLP…DPRL. Residues Ser274 and Ser289 each carry the phosphoserine modification. Disordered regions lie at residues 275 to 309 and 355 to 407; these read QSAP…MRLQ and LEQD…MSSY. Positions 291-504 are transactivation domain; the sequence is QGGVMGGSNS…LDKESFLTWL (214 aa). Positions 298–359 form a coiled coil; the sequence is SNSNQQQQMR…SQLPTLEQDG (62 aa). A compositionally biased stretch (polar residues) spans 355 to 391; that stretch reads LEQDGGTQNPVSSPGMSQELRTMTTNSSDPFLNSGTY. Position 367 is a phosphoserine; by MAPK8 and MAPK9 (Ser367). Ser371, Ser381, Ser382, and Ser388 each carry phosphoserine. Ser397 carries the phosphoserine; by LATS1 and LATS2 modification. Phosphoserine; by CK1 is present on residues Ser400 and Ser403. Tyr407 bears the Phosphotyrosine; by ABL1 mark. Phosphothreonine; by MAPK8 and MAPK9 is present on Thr412.

Belongs to the YAP1 family. In terms of assembly, part of a complex when phosphorylated that contains DSG3, PKP1, YAP1 and YWHAG; the complex is required for localization of DSG3 and YAP1 to the cell membrane in keratinocytes. Binds to the SH3 domain of the YES kinase. Binds to WBP1 and WBP2. Binds, in vitro, through the WW1 domain, to neural isoforms of ENAH that contain the PPSY motif. The phosphorylated form interacts with YWHAB. Interacts (via WW domains) with LATS1 (via PPxY motif 2). Interacts with LATS2. Interacts with TEAD1, TEAD2, TEAD3 and TEAD4. Interacts with TP73. Interacts with RUNX1. Interacts with HCK. Interacts (via WW domains) with PTPN14 (via PPxY motif 2); this interaction leads to the cytoplasmic sequestration of YAP1 and inhibits its transcriptional coactivator activity. Interacts (when phosphorylated at Ser-127) with SMAD2, SMAD3 and WWTR1. Interacts with PRRG2 (via cytoplasmic domain). Interacts (via WW domains) with PRRG4 (via cytoplasmic domain). Interacts (phosphorylated) with CLDN18; the interaction sequesters YAP1 away from the nucleus and thereby restricts transcription of YAP1 target genes. Interacts with SMAD1. Interacts with AMOTL2, the interaction is required for ubiquitination of AMOTL2 and localization of YAP1 to tight junctions. Interacts with AMOT isoform 1; the interaction facilitates translocation of YAP1 to the cytoplasm and tight junctions. Interacts (via WW domain 1) with isoform 3 of ERBB4 (via PPxY motif 2). Phosphorylated by LATS1 and LATS2; leading to cytoplasmic translocation and inactivation. Phosphorylated by ABL1; leading to YAP1 stabilization, enhanced interaction with TP73 and recruitment onto proapoptotic genes; in response to DNA damage. Phosphorylation at Ser-400 and Ser-403 by CK1 is triggered by previous phosphorylation at Ser-397 by LATS proteins and leads to YAP1 ubiquitination by SCF(beta-TRCP) E3 ubiquitin ligase and subsequent degradation. Phosphorylated at Thr-119, Ser-138, Thr-154, Ser-367 and Thr-412 by MAPK8/JNK1 and MAPK9/JNK2, which is required for the regulation of apoptosis by YAP1. Phosphorylated in the nucleus by PRP4K; phosphorylation leads to nuclear exclusion. In terms of processing, lactylation by AARS1 promotes nuclear localization and stabilization of YAP1, leading to increased Hippo signaling pathway. Delactylated by SIRT1. Post-translationally, ubiquitinated by SCF(beta-TRCP) E3 ubiquitin ligase. In terms of tissue distribution, increased expression seen in some liver and prostate cancers. Isoforms lacking the transactivation domain found in striatal neurons of patients with Huntington disease (at protein level).

The protein localises to the cytoplasm. Its subcellular location is the nucleus. It localises to the cell junction. The protein resides in the tight junction. It is found in the cell membrane. Its function is as follows. Transcriptional regulator with dual roles as a coactivator and corepressor. Critical downstream regulatory target in the Hippo signaling pathway, crucial for organ size control and tumor suppression by restricting proliferation and promoting apoptosis. The Hippo signaling pathway core involves a kinase cascade featuring STK3/MST2 and STK4/MST1, along with its regulatory partner SAV1, which phosphorylates and activates LATS1/2 in complex with their regulatory protein, MOB1. This activation leads to the phosphorylation and inactivation of the YAP1 oncoprotein and WWTR1/TAZ. Phosphorylation of YAP1 by LATS1/2 prevents its nuclear translocation, thereby regulating the expression of its target genes. The transcriptional regulation of gene expression requires TEAD transcription factors and modulates cell growth, anchorage-independent growth, and induction of epithelial-mesenchymal transition (EMT). Plays a key role in tissue tension and 3D tissue shape by regulating the cortical actomyosin network, acting via ARHGAP18, a Rho GTPase activating protein that suppresses F-actin polymerization. It also suppresses ciliogenesis by acting as a transcriptional corepressor of TEAD4 target genes AURKA and PLK1. In conjunction with WWTR1, regulates TGFB1-dependent SMAD2 and SMAD3 nuclear accumulation. Synergizes with WBP2 to enhance PGR activity. In terms of biological role, activates the C-terminal fragment (CTF) of ERBB4 (isoform 3). This chain is Transcriptional coactivator YAP1, found in Homo sapiens (Human).